The chain runs to 1896 residues: Plexin-A1 (1896 aa).

Residues 1 to 26 (MPLPPRSLQVLLLLLLLLLLLPGMWA) form the signal peptide. The Sema domain maps to 27-512 (EAGLPRAGGG…TEKQVTRVPV (486 aa)). The Extracellular portion of the chain corresponds to 27 to 1244 (EAGLPRAGGG…VYSDSLLTLP (1218 aa)). Asparagine 77 is a glycosylation site (N-linked (GlcNAc...) asparagine). 10 cysteine pairs are disulfide-bonded: cysteine 95-cysteine 104, cysteine 130-cysteine 138, cysteine 286-cysteine 407, cysteine 302-cysteine 358, cysteine 376-cysteine 395, cysteine 515-cysteine 532, cysteine 521-cysteine 563, cysteine 524-cysteine 541, cysteine 535-cysteine 547, and cysteine 598-cysteine 617. N-linked (GlcNAc...) asparagine glycans are attached at residues asparagine 660, asparagine 672, and asparagine 701. IPT/TIG domains follow at residues 864–959 (PKIL…FTFV), 961–1045 (PTFY…YNYT), 1048–1147 (PTIL…FLYY), and 1150–1236 (PVLE…LQVY). A glycan (N-linked (GlcNAc...) asparagine) is linked at asparagine 1043. N-linked (GlcNAc...) asparagine glycans are attached at residues asparagine 1187 and asparagine 1212. Residues 1245-1265 (AIVGIGGGGGLLLLVIVAVLI) form a helical membrane-spanning segment. Residues 1264–1317 (LIAYKRKSRDADRTLKRLQLQMDNLESRVALECKEAFAELQTDIHELTNDLDGA) are a coiled coil. Residues 1266-1896 (AYKRKSRDAD…QVVDTMALSS (631 aa)) are Cytoplasmic-facing.

It belongs to the plexin family. Interacts directly with NRP1 and NRP2. Interacts with PLXN1B. Interacts with FARP2, RND1 and KDR/VEGFR2. Binding of SEMA3A leads to dissociation of FARP2. Interacts with CRMP1, DPYSL2/CRMP2, DPYSL3/CRMP3 and DPYSL4/CRMP4. Interacts (via TIG domains) with TREM2; the interaction mediates SEMA6D binding and signaling through TYROBP. In terms of tissue distribution, detected in fetal brain, lung, liver and kidney.

Its subcellular location is the cell membrane. Coreceptor for SEMA3A, SEMA3C, SEMA3F and SEMA6D. Necessary for signaling by class 3 semaphorins and subsequent remodeling of the cytoskeleton. Plays a role in axon guidance, invasive growth and cell migration. Class 3 semaphorins bind to a complex composed of a neuropilin and a plexin. The plexin modulates the affinity of the complex for specific semaphorins, and its cytoplasmic domain is required for the activation of down-stream signaling events in the cytoplasm. Acts as coreceptor of TREM2 for SEMA6D in dendritic cells and is involved in the generation of immune responses and skeletal homeostasis. This is Plexin-A1 from Homo sapiens (Human).